The following is a 267-amino-acid chain: Putative F-box protein At1g61060 (267 aa).

Residues 15–63 (DYFDAIHVDLFTAKILSKLPVKSIAQCRCVSKLWSSQIRRPYYNMLFPI) form the F-box domain.

The sequence is that of Putative F-box protein At1g61060 from Arabidopsis thaliana (Mouse-ear cress).